Consider the following 94-residue polypeptide: Co-chaperonin GroES (94 aa).

The protein belongs to the GroES chaperonin family. As to quaternary structure, heptamer of 7 subunits arranged in a ring. Interacts with the chaperonin GroEL.

Its subcellular location is the cytoplasm. Its function is as follows. Together with the chaperonin GroEL, plays an essential role in assisting protein folding. The GroEL-GroES system forms a nano-cage that allows encapsulation of the non-native substrate proteins and provides a physical environment optimized to promote and accelerate protein folding. GroES binds to the apical surface of the GroEL ring, thereby capping the opening of the GroEL channel. This is Co-chaperonin GroES from Streptococcus oralis.